The following is a 130-amino-acid chain: uncharacterized protein (130 aa).

This is an uncharacterized protein from Schizosaccharomyces pombe (strain 972 / ATCC 24843) (Fission yeast).